The primary structure comprises 562 residues: MKKSLKDLTGLIVAFALATLLFLYWPLYQRSVPKANNDTPVDVVLIGGGIMSVTLGTYLQELQPDWKIELFERLNGIAQESSDGWNNAGTGHSAFAELNYTPELQDGTIEIKRAIKIAEQFEISREFWSHQVRHGRLPAPTEFINATPHMSFVWGEDRIEYLRKRHNALIKNPLFYGMQFSTDPAVIQQWAPLLMEGRTQDQKIAATYMPLGTDVNFGVITRDLAKHLQYSQNFALHLDHEVTALRQNPDKTWNVTVKNLNNGQERSIKSRFVFIGAGGAALKLLQLSGIPESKDYAGFPVGGQFLSFENTAITKRHNVKAYGMAESGSPPMSVPHLDARKLDGKSIVLFGPFALYSTKFLKKGSWFDLYSSVNHHNAAGMLSVGKNNIDLVKYLMKQATLTDADRHAELLKYFPNAKPTDWTLVTAGQRVQIIKRDPEKGMILQFGTEIVMDKDHTLATLLGASPGASTSPSIMLDLLAKAFPQQMKNGWETQLKKIIPSYGQHINDSPALTNKIRRMTSETLSLPYLEVPDKSATPPDPTIAPKHQHSPTHNANSEMQAL.

The interval 530 to 562 is disordered; it reads EVPDKSATPPDPTIAPKHQHSPTHNANSEMQAL. The span at 551–562 shows a compositional bias: polar residues; that stretch reads PTHNANSEMQAL.

It belongs to the MQO family. Requires FAD as cofactor.

It catalyses the reaction (S)-malate + a quinone = a quinol + oxaloacetate. The protein operates within carbohydrate metabolism; tricarboxylic acid cycle; oxaloacetate from (S)-malate (quinone route): step 1/1. The sequence is that of Probable malate:quinone oxidoreductase from Xylella fastidiosa (strain 9a5c).